Consider the following 243-residue polypeptide: Ribosomal RNA small subunit methyltransferase G (243 aa).

S-adenosyl-L-methionine contacts are provided by residues Gly79, Phe84, 130–131, and Arg150; that span reads AE. The interval 219 to 243 is disordered; it reads EKKKQTPNKYPRKPGTPGKDPIGKK.

It belongs to the methyltransferase superfamily. RNA methyltransferase RsmG family.

The protein resides in the cytoplasm. In terms of biological role, specifically methylates the N7 position of a guanine in 16S rRNA. In Pediococcus pentosaceus (strain ATCC 25745 / CCUG 21536 / LMG 10740 / 183-1w), this protein is Ribosomal RNA small subunit methyltransferase G.